The sequence spans 161 residues: Transcriptional repressor NrdR (161 aa).

Over residues 1–11 the composition is skewed to basic residues; that stretch reads MQCPHCQHHNS. Positions 1 to 21 are disordered; it reads MQCPHCQHHNSRVLESRSSEG. A zinc finger spans residues 3 to 34; sequence CPHCQHHNSRVLESRSSEGGQSIRRRRECLEC. The ATP-cone domain maps to 49-139; that stretch reads VTVIKQDGER…VYGRFQGIAD (91 aa).

It belongs to the NrdR family. Zn(2+) serves as cofactor.

Its function is as follows. Negatively regulates transcription of bacterial ribonucleotide reductase nrd genes and operons by binding to NrdR-boxes. In Synechocystis sp. (strain ATCC 27184 / PCC 6803 / Kazusa), this protein is Transcriptional repressor NrdR.